A 234-amino-acid chain; its full sequence is Uridylate kinase (234 aa).

An ATP-binding site is contributed by 9 to 12; sequence KLSG. Position 51 (G51) interacts with UMP. Positions 52 and 56 each coordinate ATP. Residues D71 and 132 to 139 contribute to the UMP site; that span reads CGNPFFTT. T159, Y165, and D168 together coordinate ATP.

Belongs to the UMP kinase family. In terms of assembly, homohexamer.

The protein localises to the cytoplasm. The catalysed reaction is UMP + ATP = UDP + ADP. It functions in the pathway pyrimidine metabolism; CTP biosynthesis via de novo pathway; UDP from UMP (UMPK route): step 1/1. With respect to regulation, inhibited by UTP. In terms of biological role, catalyzes the reversible phosphorylation of UMP to UDP. In Prochlorococcus marinus (strain MIT 9215), this protein is Uridylate kinase.